A 195-amino-acid polypeptide reads, in one-letter code: ATP-dependent Clp protease proteolytic subunit (195 aa).

The active-site Nucleophile is serine 98. Residue histidine 123 is part of the active site.

The protein belongs to the peptidase S14 family. As to quaternary structure, fourteen ClpP subunits assemble into 2 heptameric rings which stack back to back to give a disk-like structure with a central cavity, resembling the structure of eukaryotic proteasomes.

The protein resides in the cytoplasm. The enzyme catalyses Hydrolysis of proteins to small peptides in the presence of ATP and magnesium. alpha-casein is the usual test substrate. In the absence of ATP, only oligopeptides shorter than five residues are hydrolyzed (such as succinyl-Leu-Tyr-|-NHMec, and Leu-Tyr-Leu-|-Tyr-Trp, in which cleavage of the -Tyr-|-Leu- and -Tyr-|-Trp bonds also occurs).. In terms of biological role, cleaves peptides in various proteins in a process that requires ATP hydrolysis. Has a chymotrypsin-like activity. Plays a major role in the degradation of misfolded proteins. This Sulfurovum sp. (strain NBC37-1) protein is ATP-dependent Clp protease proteolytic subunit.